The following is a 483-amino-acid chain: Aspartyl/glutamyl-tRNA(Asn/Gln) amidotransferase subunit B (483 aa).

Belongs to the GatB/GatE family. GatB subfamily. As to quaternary structure, heterotrimer of A, B and C subunits.

It catalyses the reaction L-glutamyl-tRNA(Gln) + L-glutamine + ATP + H2O = L-glutaminyl-tRNA(Gln) + L-glutamate + ADP + phosphate + H(+). It carries out the reaction L-aspartyl-tRNA(Asn) + L-glutamine + ATP + H2O = L-asparaginyl-tRNA(Asn) + L-glutamate + ADP + phosphate + 2 H(+). Its function is as follows. Allows the formation of correctly charged Asn-tRNA(Asn) or Gln-tRNA(Gln) through the transamidation of misacylated Asp-tRNA(Asn) or Glu-tRNA(Gln) in organisms which lack either or both of asparaginyl-tRNA or glutaminyl-tRNA synthetases. The reaction takes place in the presence of glutamine and ATP through an activated phospho-Asp-tRNA(Asn) or phospho-Glu-tRNA(Gln). This Rickettsia africae (strain ESF-5) protein is Aspartyl/glutamyl-tRNA(Asn/Gln) amidotransferase subunit B.